The chain runs to 217 residues: 7-cyano-7-deazaguanine synthase (217 aa).

10-20 (FSGGQDSTTCL) contacts ATP. Zn(2+) is bound by residues Cys-185, Cys-194, Cys-197, and Cys-200.

It belongs to the QueC family. Homodimer. Zn(2+) is required as a cofactor.

The catalysed reaction is 7-carboxy-7-deazaguanine + NH4(+) + ATP = 7-cyano-7-deazaguanine + ADP + phosphate + H2O + H(+). It participates in purine metabolism; 7-cyano-7-deazaguanine biosynthesis. In terms of biological role, catalyzes the ATP-dependent conversion of 7-carboxy-7-deazaguanine (CDG) to 7-cyano-7-deazaguanine (preQ(0)). This chain is 7-cyano-7-deazaguanine synthase, found in Streptococcus thermophilus (strain CNRZ 1066).